Consider the following 207-residue polypeptide: SPRY domain-containing protein 4 (207 aa).

The region spanning 12 to 207 is the B30.2/SPRY domain; the sequence is YRWGTKRWGV…HSGLEVPKGL (196 aa). Lys-53 and Lys-130 each carry N6-acetyllysine. N6-succinyllysine is present on Lys-139.

The sequence is that of SPRY domain-containing protein 4 (Spryd4) from Mus musculus (Mouse).